A 751-amino-acid chain; its full sequence is Conserved oligomeric Golgi complex subunit 5 (751 aa).

Disordered regions lie at residues 1 to 21 (MVTG…DDND) and 244 to 263 (SPTH…KTPQ).

Belongs to the COG5 family. Component of the conserved oligomeric Golgi complex which is composed of eight different subunits and is required for normal Golgi morphology and localization.

It is found in the golgi apparatus membrane. Required for normal Golgi function and necessary during spermatogenesis. Required for cleavage furrow ingression during cytokinesis in dividing spermatocytes and for the extensive polarized cell growth that accompanies spermatid elongation. The chain is Conserved oligomeric Golgi complex subunit 5 (fws) from Drosophila melanogaster (Fruit fly).